Consider the following 654-residue polypeptide: Glutamyl-tRNA(Gln) amidotransferase subunit B, mitochondrial (654 aa).

The N-terminal 8 residues, 1 to 8 (MGRIPTRE), are a transit peptide targeting the mitochondrion. Positions 79 to 101 (DQAKASKAQAKGKKKRSSADNQT) are disordered.

This sequence belongs to the GatB/GatE family. GatB subfamily. As to quaternary structure, subunit of the heterotrimeric GatCAB amidotransferase (AdT) complex, composed of A, B and C subunits.

The protein localises to the mitochondrion. The enzyme catalyses L-glutamyl-tRNA(Gln) + L-glutamine + ATP + H2O = L-glutaminyl-tRNA(Gln) + L-glutamate + ADP + phosphate + H(+). In terms of biological role, allows the formation of correctly charged Gln-tRNA(Gln) through the transamidation of misacylated Glu-tRNA(Gln) in the mitochondria. The reaction takes place in the presence of glutamine and ATP through an activated gamma-phospho-Glu-tRNA(Gln). This is Glutamyl-tRNA(Gln) amidotransferase subunit B, mitochondrial from Pyricularia oryzae (strain 70-15 / ATCC MYA-4617 / FGSC 8958) (Rice blast fungus).